We begin with the raw amino-acid sequence, 450 residues long: Phosphoglucosamine mutase (450 aa).

Serine 107 functions as the Phosphoserine intermediate in the catalytic mechanism. 4 residues coordinate Mg(2+): serine 107, aspartate 246, aspartate 248, and aspartate 250. Residue serine 107 is modified to Phosphoserine.

It belongs to the phosphohexose mutase family. It depends on Mg(2+) as a cofactor. Activated by phosphorylation.

The enzyme catalyses alpha-D-glucosamine 1-phosphate = D-glucosamine 6-phosphate. Its function is as follows. Catalyzes the conversion of glucosamine-6-phosphate to glucosamine-1-phosphate. The sequence is that of Phosphoglucosamine mutase from Aromatoleum aromaticum (strain DSM 19018 / LMG 30748 / EbN1) (Azoarcus sp. (strain EbN1)).